Consider the following 252-residue polypeptide: tRNA1(Val) (adenine(37)-N6)-methyltransferase (252 aa).

This sequence belongs to the methyltransferase superfamily. tRNA (adenine-N(6)-)-methyltransferase family.

The protein localises to the cytoplasm. It carries out the reaction adenosine(37) in tRNA1(Val) + S-adenosyl-L-methionine = N(6)-methyladenosine(37) in tRNA1(Val) + S-adenosyl-L-homocysteine + H(+). Its function is as follows. Specifically methylates the adenine in position 37 of tRNA(1)(Val) (anticodon cmo5UAC). In Yersinia pseudotuberculosis serotype IB (strain PB1/+), this protein is tRNA1(Val) (adenine(37)-N6)-methyltransferase.